Here is a 444-residue protein sequence, read N- to C-terminus: MSTRVLTLTLLKKRHLMQCFWSTVGSVHLRSIASDKIPSHAVEASLYVHWPYCLKRCSYCNFNKYISRSENHDTMTECLQKETETLLKLSQVSRITSVFFGGGTPSLAQPSTIAAVLETVTKNSNLSDLAEVTLEVNPTPAGKARLKDFTLAGVNRFSIGVQSLNADHLRILGRDHSVQHALQTVSEARKLCPGRVSVDIMFALPGQSVSCWQKQLEELLYVCDDHISLYQLTLERGTQLFKQVESGKLSVPGDEVTAIMYKTACRVLEESGFHQYEVSNFARNNAVSEHNMGYWRGHQYIGVGPGAHGRFVPHGDGGVQREARTQTLEPDVWIKEVQSRGRGTRRRITLHHLQLLEEVLVMGLRMNEGITHQHWELFSPEANLQQVFGKSANIQELQGGRFLILDDRGLRCSWEGLVLLDSILPTILLELEMFFHSRGIKRTQ.

Residues 1–39 (MSTRVLTLTLLKKRHLMQCFWSTVGSVHLRSIASDKIPS) constitute a mitochondrion transit peptide. A Radical SAM core domain is found at 40-274 (HAVEASLYVH…CRVLEESGFH (235 aa)). S-adenosyl-L-methionine is bound at residue tyrosine 47. The [4Fe-4S] cluster site is built by cysteine 53, cysteine 57, and cysteine 60. S-adenosyl-L-methionine is bound by residues glycine 102, 103-104 (GT), glutamate 135, glutamine 162, arginine 174, and aspartate 199.

Belongs to the anaerobic coproporphyrinogen-III oxidase family. HemW subfamily. It depends on [4Fe-4S] cluster as a cofactor.

The protein localises to the mitochondrion. Its function is as follows. May be a heme chaperone, appears to bind heme. Homologous bacterial proteins do not have oxygen-independent coproporphyrinogen-III oxidase activity. Binds 1 [4Fe-4S] cluster. The cluster is coordinated with 3 cysteines and an exchangeable S-adenosyl-L-methionine. This chain is Radical S-adenosyl methionine domain-containing protein 1, mitochondrial (rsad1), found in Danio rerio (Zebrafish).